Consider the following 20-residue polypeptide: Equinatoxin-1'' (20 aa).

Residues 3-12 (AVAGAVIEGA) form a plays an important role in the hemolytic activity region. The interval 11-20 (GATLTFNVLQ) is N-terminal region.

This sequence belongs to the actinoporin family. Sea anemone subfamily. In terms of assembly, octamer or nonamer in membranes. Monomer in the soluble state.

The protein localises to the secreted. Its subcellular location is the nematocyst. The protein resides in the target cell membrane. Functionally, pore-forming protein that forms cations-selective hydrophilic pores of around 1 nm and causes cardiac stimulation and cytolysis. Pore formation is a multi-step process that involves specific recognition of membrane sphingomyelin (but neither cholesterol nor phosphatidylcholine) using aromatic rich region and adjacent phosphocholine (POC) binding site, firm binding to the membrane (mainly driven by hydrophobic interactions) accompanied by the transfer of the N-terminal region to the lipid-water interface and finally pore formation after oligomerization of monomers. Cytolytic effects include red blood cells hemolysis, platelet aggregation and lysis, cytotoxic and cytostatic effects on fibroblasts. Lethality in mammals has been ascribed to severe vasospasm of coronary vessels, cardiac arrhythmia, and inotropic effects. The protein is Equinatoxin-1'' of Actinia equina (Beadlet anemone).